Consider the following 154-residue polypeptide: 6,7-dimethyl-8-ribityllumazine synthase (154 aa).

Residues phenylalanine 23, 57-59 (AFE), and 81-83 (AVI) each bind 5-amino-6-(D-ribitylamino)uracil. Residue 86 to 87 (ST) coordinates (2S)-2-hydroxy-3-oxobutyl phosphate. The Proton donor role is filled by histidine 89. Phenylalanine 114 serves as a coordination point for 5-amino-6-(D-ribitylamino)uracil. Arginine 128 serves as a coordination point for (2S)-2-hydroxy-3-oxobutyl phosphate.

Belongs to the DMRL synthase family.

The catalysed reaction is (2S)-2-hydroxy-3-oxobutyl phosphate + 5-amino-6-(D-ribitylamino)uracil = 6,7-dimethyl-8-(1-D-ribityl)lumazine + phosphate + 2 H2O + H(+). It participates in cofactor biosynthesis; riboflavin biosynthesis; riboflavin from 2-hydroxy-3-oxobutyl phosphate and 5-amino-6-(D-ribitylamino)uracil: step 1/2. In terms of biological role, catalyzes the formation of 6,7-dimethyl-8-ribityllumazine by condensation of 5-amino-6-(D-ribitylamino)uracil with 3,4-dihydroxy-2-butanone 4-phosphate. This is the penultimate step in the biosynthesis of riboflavin. The protein is 6,7-dimethyl-8-ribityllumazine synthase of Syntrophotalea carbinolica (strain DSM 2380 / NBRC 103641 / GraBd1) (Pelobacter carbinolicus).